The sequence spans 385 residues: UPF0284 protein PMM0439 (385 aa).

It belongs to the UPF0284 family.

The sequence is that of UPF0284 protein PMM0439 from Prochlorococcus marinus subsp. pastoris (strain CCMP1986 / NIES-2087 / MED4).